The sequence spans 211 residues: Urease accessory protein UreE (211 aa).

Residues 134–211 (FDPEGGAYAP…DHHGHGHEHK (78 aa)) are disordered. Over residues 147-202 (PSHDHAGHDHAHDSHAHHDHDHGKHAQHDHGKHDHAHHDHAAHDDHHVHDEHCGHD) the composition is skewed to basic and acidic residues.

Belongs to the UreE family.

The protein resides in the cytoplasm. Involved in urease metallocenter assembly. Binds nickel. Probably functions as a nickel donor during metallocenter assembly. The polypeptide is Urease accessory protein UreE (Rhodopseudomonas palustris (strain BisB18)).